A 370-amino-acid polypeptide reads, in one-letter code: DNA replication and repair protein RecF (370 aa).

Residue 30 to 37 (GPNGSGKT) participates in ATP binding.

Belongs to the RecF family.

Its subcellular location is the cytoplasm. Its function is as follows. The RecF protein is involved in DNA metabolism; it is required for DNA replication and normal SOS inducibility. RecF binds preferentially to single-stranded, linear DNA. It also seems to bind ATP. In Prosthecochloris aestuarii (strain DSM 271 / SK 413), this protein is DNA replication and repair protein RecF.